Reading from the N-terminus, the 562-residue chain is ATP synthase subunit beta, mitochondrial (562 aa).

Low complexity-rich tracts occupy residues 1–13 (MASR…LLRS) and 20–40 (SKSP…SSKS). Disordered stretches follow at residues 1-43 (MASR…SRAS) and 58-83 (SAAA…KITD). A mitochondrion-targeting transit peptide spans 1-55 (MASRRLLSSLLRSSSRRSVSKSPISNINPKLSSSSPSSKSRASPYGYLLTRAAEY). 237-244 (GGAGVGKT) contributes to the ATP binding site.

The protein belongs to the ATPase alpha/beta chains family. As to quaternary structure, F-type ATPases have 2 components, CF(1) - the catalytic core - and CF(0) - the membrane proton channel. CF(1) has five subunits: alpha(3), beta(3), gamma(1), delta(1), epsilon(1). CF(0) has three main subunits: a, b and c.

It is found in the mitochondrion. Its subcellular location is the mitochondrion inner membrane. The enzyme catalyses ATP + H2O + 4 H(+)(in) = ADP + phosphate + 5 H(+)(out). Functionally, mitochondrial membrane ATP synthase (F(1)F(0) ATP synthase or Complex V) produces ATP from ADP in the presence of a proton gradient across the membrane which is generated by electron transport complexes of the respiratory chain. F-type ATPases consist of two structural domains, F(1) - containing the extramembraneous catalytic core, and F(0) - containing the membrane proton channel, linked together by a central stalk and a peripheral stalk. During catalysis, ATP synthesis in the catalytic domain of F(1) is coupled via a rotary mechanism of the central stalk subunits to proton translocation. Subunits alpha and beta form the catalytic core in F(1). Rotation of the central stalk against the surrounding alpha(3)beta(3) subunits leads to hydrolysis of ATP in three separate catalytic sites on the beta subunits. This chain is ATP synthase subunit beta, mitochondrial (ATPB), found in Hevea brasiliensis (Para rubber tree).